The chain runs to 93 residues: Small ribosomal subunit protein uS19 (93 aa).

Belongs to the universal ribosomal protein uS19 family.

In terms of biological role, protein S19 forms a complex with S13 that binds strongly to the 16S ribosomal RNA. This is Small ribosomal subunit protein uS19 from Paenarthrobacter aurescens (strain TC1).